The chain runs to 181 residues: Ribosome-recycling factor (181 aa).

This sequence belongs to the RRF family.

Its subcellular location is the cytoplasm. Functionally, responsible for the release of ribosomes from messenger RNA at the termination of protein biosynthesis. May increase the efficiency of translation by recycling ribosomes from one round of translation to another. The polypeptide is Ribosome-recycling factor (Tropheryma whipplei (strain TW08/27) (Whipple's bacillus)).